The chain runs to 130 residues: D-ribose pyranase (130 aa).

The active-site Proton donor is His20. Substrate contacts are provided by residues Asp28, His97, and Tyr119–Asn121.

It belongs to the RbsD / FucU family. RbsD subfamily. As to quaternary structure, homodecamer.

It localises to the cytoplasm. It carries out the reaction beta-D-ribopyranose = beta-D-ribofuranose. It participates in carbohydrate metabolism; D-ribose degradation; D-ribose 5-phosphate from beta-D-ribopyranose: step 1/2. Catalyzes the interconversion of beta-pyran and beta-furan forms of D-ribose. This is D-ribose pyranase from Lacticaseibacillus casei (strain BL23) (Lactobacillus casei).